The following is a 371-amino-acid chain: Alanine racemase (371 aa).

The Proton acceptor; specific for D-alanine role is filled by Lys40. Lys40 is modified (N6-(pyridoxal phosphate)lysine). Arg138 contributes to the substrate binding site. The Proton acceptor; specific for L-alanine role is filled by Tyr267. A substrate-binding site is contributed by Met314.

It belongs to the alanine racemase family. Requires pyridoxal 5'-phosphate as cofactor.

It catalyses the reaction L-alanine = D-alanine. It participates in amino-acid biosynthesis; D-alanine biosynthesis; D-alanine from L-alanine: step 1/1. Its function is as follows. Catalyzes the interconversion of L-alanine and D-alanine. May also act on other amino acids. This is Alanine racemase (alr) from Ligilactobacillus salivarius (strain UCC118) (Lactobacillus salivarius).